Here is a 306-residue protein sequence, read N- to C-terminus: Methionyl-tRNA formyltransferase (306 aa).

110-113 is a binding site for (6S)-5,6,7,8-tetrahydrofolate; sequence SLLP.

Belongs to the Fmt family.

The enzyme catalyses L-methionyl-tRNA(fMet) + (6R)-10-formyltetrahydrofolate = N-formyl-L-methionyl-tRNA(fMet) + (6S)-5,6,7,8-tetrahydrofolate + H(+). Attaches a formyl group to the free amino group of methionyl-tRNA(fMet). The formyl group appears to play a dual role in the initiator identity of N-formylmethionyl-tRNA by promoting its recognition by IF2 and preventing the misappropriation of this tRNA by the elongation apparatus. This Brucella suis (strain ATCC 23445 / NCTC 10510) protein is Methionyl-tRNA formyltransferase.